Consider the following 572-residue polypeptide: MRTSQYLLSTLKETPADAEVISHQLMLRAGMIRKLASGLYTWLPTGVRVLKKVENIVREEMNNAGAIEVLMPVVQPADLWQESGRWEQYGPELLRFVDRGERPFVLGPTHEEVITDLIRNELSSYKQLPLNFYQIQTKFRDEVRPRFGVMRSREFLMKDAYSFHTSQESLQETYDAMYAAYSKIFSRMGLDFRAVQADTGSIGGSASHEFQVLAQSGEDDVVFSDTSDYAANIELAEAIAPKEPRAAATQEMTLVDTPNAKTIAELVEQFNLPIEKTVKTLLVKAVEGSSFPLVALLVRGDHELNEVKAEKLPQVASPLTFATEEEIRAVVKAGPGSLGPVNMPIPVVIDRTVAAMSDFAAGANIDGKHYFGINWDRDVATPEIADIRNVVAGDPSPDGQGTLQIKRGIEVGHIFQLGTKYSEALKASVQGEDGRNQILTMGCYGIGVTRVVAAAIEQNYDERGIVWPDAIAPFQVAILPMNMHKSFRVQELAEKLYSELRAQGIEVLLDDRKERPGVMFADMELIGIPHTIVLGDRNLDNDDIEYKYRRNGEKQLIKTGDIVDYLVKQIKG.

Belongs to the class-II aminoacyl-tRNA synthetase family. ProS type 1 subfamily. Homodimer.

Its subcellular location is the cytoplasm. It carries out the reaction tRNA(Pro) + L-proline + ATP = L-prolyl-tRNA(Pro) + AMP + diphosphate. In terms of biological role, catalyzes the attachment of proline to tRNA(Pro) in a two-step reaction: proline is first activated by ATP to form Pro-AMP and then transferred to the acceptor end of tRNA(Pro). As ProRS can inadvertently accommodate and process non-cognate amino acids such as alanine and cysteine, to avoid such errors it has two additional distinct editing activities against alanine. One activity is designated as 'pretransfer' editing and involves the tRNA(Pro)-independent hydrolysis of activated Ala-AMP. The other activity is designated 'posttransfer' editing and involves deacylation of mischarged Ala-tRNA(Pro). The misacylated Cys-tRNA(Pro) is not edited by ProRS. This chain is Proline--tRNA ligase, found in Escherichia coli O7:K1 (strain IAI39 / ExPEC).